The following is a 183-amino-acid chain: Ribosome maturation factor RimM (183 aa).

The 81-residue stretch at 103-183 folds into the PRC barrel domain; the sequence is EEGDYYWKDL…SIEVDWDPGF (81 aa).

This sequence belongs to the RimM family. As to quaternary structure, binds ribosomal protein uS19.

It is found in the cytoplasm. Functionally, an accessory protein needed during the final step in the assembly of 30S ribosomal subunit, possibly for assembly of the head region. Essential for efficient processing of 16S rRNA. May be needed both before and after RbfA during the maturation of 16S rRNA. It has affinity for free ribosomal 30S subunits but not for 70S ribosomes. This is Ribosome maturation factor RimM from Escherichia coli O157:H7 (strain EC4115 / EHEC).